Here is a 313-residue protein sequence, read N- to C-terminus: Ketimine reductase mu-crystallin (313 aa).

R47 contributes to the 3,3',5-triiodo-L-thyronine binding site. Residues S90, H91, R118, A143, V145, Q146, N167, R168, T169, N172, T204, M205, and V225 each contribute to the NADPH site. E256 serves as a coordination point for 3,3',5-triiodo-L-thyronine. Residue S291 coordinates NADPH.

Belongs to the ornithine cyclodeaminase/mu-crystallin family. In terms of assembly, homodimer. Binds the thyroid hormone triiodothyronine (T3); T3 binding inhibits enzymatic activity. As to expression, expressed in the spiral ligament of the cochlea (at protein level).

It is found in the cytoplasm. It catalyses the reaction L-pipecolate + NADP(+) = Delta(1)-piperideine-2-carboxylate + NADPH + H(+). The catalysed reaction is L-pipecolate + NAD(+) = Delta(1)-piperideine-2-carboxylate + NADH + H(+). The enzyme catalyses L-proline + NADP(+) = 1-pyrroline-2-carboxylate + NADPH + H(+). It carries out the reaction L-proline + NAD(+) = 1-pyrroline-2-carboxylate + NADH + H(+). It catalyses the reaction (3R)-1,4-thiomorpholine-3-carboxylate + NAD(+) = 3,4-dehydrothiomorpholine-3-carboxylate + NADH + 2 H(+). The catalysed reaction is (3R)-1,4-thiomorpholine-3-carboxylate + NADP(+) = 3,4-dehydrothiomorpholine-3-carboxylate + NADPH + 2 H(+). The enzyme catalyses (S)-cystathionine ketimine + NADH + 2 H(+) = (3R,5S)-2,3,5,6,7-pentahydro-1,4-thiazepine-3,5-dicarboxylate + NAD(+). It carries out the reaction (S)-cystathionine ketimine + NADPH + 2 H(+) = (3R,5S)-2,3,5,6,7-pentahydro-1,4-thiazepine-3,5-dicarboxylate + NADP(+). It catalyses the reaction (R)-lanthionine ketimine + NADPH + 2 H(+) = (3R,5R)-1,4-thiomorpholine-3,5-dicarboxylate + NADP(+). The catalysed reaction is Delta(2)-thiazoline-2-carboxylate + NADPH + 2 H(+) = L-thiazolidine-2-carboxylate + NADP(+). In terms of biological role, catalyzes the NAD(P)H-dependent reduction of imine double bonds of a number of cyclic ketimine substrates, including sulfur-containing cyclic ketimines. Under physiological conditions, it efficiently catalyzes delta(1)-piperideine-2-carboxylate (P2C) and delta(1)-pyrroline-2-carboxylate (Pyr2C) reduction, suggesting a central role in lysine and glutamate metabolism. Additional substrates are delta(2)-thiazoline-2-carboxylate (T2C), 3,4-dehydrothiomorpholine-3-carboxylate (AECK), and (R)-lanthionine ketimine (LK) that is reduced at very low rate compared to other substrates. Also catalyzes the NAD(P)H-dependent reduction of (S)-cystathionine ketimine (CysK). This Mus musculus (Mouse) protein is Ketimine reductase mu-crystallin.